The sequence spans 473 residues: Calcium/calmodulin-dependent protein kinase type IV (473 aa).

S12 and S13 each carry phosphoserine; by autocatalysis. Residues 46–300 (FEVESELGRG…TFQALQHPWV (255 aa)) enclose the Protein kinase domain. ATP contacts are provided by residues 52–60 (LGRGATSIV) and K75. The O-linked (GlcNAc) threonine glycan is linked to T57. S58 carries an O-linked (GlcNAc) serine glycan. Residue S137 is glycosylated (O-linked (GlcNAc) serine). The active-site Proton acceptor is D164. O-linked (GlcNAc) serine glycosylation is present at S189. T200 bears the Phosphothreonine; by CaMKK1 and CaMKK2 mark. An autoinhibitory domain region spans residues 305–321 (ANFVHMDTAQKKLQEFN). Residues 306 to 323 (NFVHMDTAQKKLQEFNAR) form a PP2A-binding region. The interval 322–341 (ARRKLKAAVKAVVASSRLGS) is calmodulin-binding. S336 carries the post-translational modification Phosphoserine; by autocatalysis. The residue at position 341 (S341) is a Phosphoserine. Over residues 341–350 (SASSSHGSIQ) the composition is skewed to low complexity. Disordered regions lie at residues 341–368 (SASSSHGSIQESHKASRDPSPIQDGNED) and 445–473 (EEAAAPREGQGSSAVGFEVPQQDVILPEY). S344, S345, and S356 each carry an O-linked (GlcNAc) serine glycan. Position 360 is a phosphoserine (S360).

It belongs to the protein kinase superfamily. CAMK Ser/Thr protein kinase family. CaMK subfamily. In terms of assembly, monomer. Interacts with protein phosphatase 2A (PPP2CA/PPP2CB); the interaction is mutually exclusive with binding to Ca(2+)/calmodulin. Post-translationally, phosphorylated by CaMKK1 and CaMKK2 on Thr-200. Dephosphorylated by protein phosphatase 2A. Autophosphorylated on Ser-12 and Ser-13. Glycosylation at Ser-189 modulates the phosphorylation of CaMK4 at Thr-200 and negatively regulates its activity toward CREB1 in basal conditions and during early inomycin stimulation. As to expression, expressed in brain, thymus, CD4 T-cells, testis and epithelial ovarian cancer tissue.

Its subcellular location is the cytoplasm. It is found in the nucleus. It catalyses the reaction L-seryl-[protein] + ATP = O-phospho-L-seryl-[protein] + ADP + H(+). The enzyme catalyses L-threonyl-[protein] + ATP = O-phospho-L-threonyl-[protein] + ADP + H(+). Activated by Ca(2+)/calmodulin. Binding of calmodulin results in conformational change that relieves intrasteric autoinhibition and allows phosphorylation of Thr-200 within the activation loop by CaMKK1 or CaMKK2. Phosphorylation of Thr-200 results in a 10-20-fold increase in total activity to generate Ca(2+)/calmodulin-independent activity. Autophosphorylation of the N-terminus Ser-12 and Ser-13 is required for full activation. Inactivated by protein phosphatase 2A (PPP2CA/PPP2CB) which dephosphorylates Thr-200, thereby terminating autonomous activity and helping to maintain the enzyme in its autoinhibited state. Calcium/calmodulin-dependent protein kinase that operates in the calcium-triggered CaMKK-CaMK4 signaling cascade and regulates, mainly by phosphorylation, the activity of several transcription activators, such as CREB1, MEF2D, JUN and RORA, which play pivotal roles in immune response, inflammation, and memory consolidation. In the thymus, regulates the CD4(+)/CD8(+) double positive thymocytes selection threshold during T-cell ontogeny. In CD4 memory T-cells, is required to link T-cell antigen receptor (TCR) signaling to the production of IL2, IFNG and IL4 (through the regulation of CREB and MEF2). Regulates the differentiation and survival phases of osteoclasts and dendritic cells (DCs). Mediates DCs survival by linking TLR4 and the regulation of temporal expression of BCL2. Phosphorylates the transcription activator CREB1 on 'Ser-133' in hippocampal neuron nuclei and contribute to memory consolidation and long term potentiation (LTP) in the hippocampus. Can activate the MAP kinases MAPK1/ERK2, MAPK8/JNK1 and MAPK14/p38 and stimulate transcription through the phosphorylation of ELK1 and ATF2. Can also phosphorylate in vitro CREBBP, PRM2, MEF2A and STMN1/OP18. The sequence is that of Calcium/calmodulin-dependent protein kinase type IV (CAMK4) from Homo sapiens (Human).